Consider the following 560-residue polypeptide: Dihydroxy-acid dehydratase (560 aa).

A Mg(2+)-binding site is contributed by Asp80. A [2Fe-2S] cluster-binding site is contributed by Cys121. Asp122 and Lys123 together coordinate Mg(2+). Lys123 is modified (N6-carboxylysine). Cys194 is a binding site for [2Fe-2S] cluster. Glu447 is a binding site for Mg(2+). The Proton acceptor role is filled by Ser473.

This sequence belongs to the IlvD/Edd family. In terms of assembly, homodimer. Requires [2Fe-2S] cluster as cofactor. It depends on Mg(2+) as a cofactor.

It carries out the reaction (2R)-2,3-dihydroxy-3-methylbutanoate = 3-methyl-2-oxobutanoate + H2O. The catalysed reaction is (2R,3R)-2,3-dihydroxy-3-methylpentanoate = (S)-3-methyl-2-oxopentanoate + H2O. Its pathway is amino-acid biosynthesis; L-isoleucine biosynthesis; L-isoleucine from 2-oxobutanoate: step 3/4. It participates in amino-acid biosynthesis; L-valine biosynthesis; L-valine from pyruvate: step 3/4. In terms of biological role, functions in the biosynthesis of branched-chain amino acids. Catalyzes the dehydration of (2R,3R)-2,3-dihydroxy-3-methylpentanoate (2,3-dihydroxy-3-methylvalerate) into 2-oxo-3-methylpentanoate (2-oxo-3-methylvalerate) and of (2R)-2,3-dihydroxy-3-methylbutanoate (2,3-dihydroxyisovalerate) into 2-oxo-3-methylbutanoate (2-oxoisovalerate), the penultimate precursor to L-isoleucine and L-valine, respectively. This chain is Dihydroxy-acid dehydratase, found in Chlorobaculum parvum (strain DSM 263 / NCIMB 8327) (Chlorobium vibrioforme subsp. thiosulfatophilum).